We begin with the raw amino-acid sequence, 118 residues long: Small ribosomal subunit protein uS13 (118 aa).

Residues 92–118 form a disordered region; sequence RKGLPVRGQRTKTNARTRKGPRKPIRK.

This sequence belongs to the universal ribosomal protein uS13 family. As to quaternary structure, part of the 30S ribosomal subunit. Forms a loose heterodimer with protein S19. Forms two bridges to the 50S subunit in the 70S ribosome.

Its function is as follows. Located at the top of the head of the 30S subunit, it contacts several helices of the 16S rRNA. In the 70S ribosome it contacts the 23S rRNA (bridge B1a) and protein L5 of the 50S subunit (bridge B1b), connecting the 2 subunits; these bridges are implicated in subunit movement. Contacts the tRNAs in the A and P-sites. This Pseudomonas putida (strain W619) protein is Small ribosomal subunit protein uS13.